The chain runs to 447 residues: N-succinylarginine dihydrolase (447 aa).

Residues 19–28 (AGLSFGNEAS), N110, and 137–138 (HR) each bind substrate. E174 is a catalytic residue. R212 contacts substrate. The active site involves H248. Substrate is bound by residues D250 and N359. The active-site Nucleophile is the C365.

The protein belongs to the succinylarginine dihydrolase family. As to quaternary structure, homodimer.

The catalysed reaction is N(2)-succinyl-L-arginine + 2 H2O + 2 H(+) = N(2)-succinyl-L-ornithine + 2 NH4(+) + CO2. The protein operates within amino-acid degradation; L-arginine degradation via AST pathway; L-glutamate and succinate from L-arginine: step 2/5. Catalyzes the hydrolysis of N(2)-succinylarginine into N(2)-succinylornithine, ammonia and CO(2). The sequence is that of N-succinylarginine dihydrolase from Escherichia coli O139:H28 (strain E24377A / ETEC).